We begin with the raw amino-acid sequence, 257 residues long: Hydroxypyruvate/pyruvate aldolase (257 aa).

Histidine 48 acts as the Proton acceptor in catalysis. Residues glutamate 152 and aspartate 178 each contribute to the a divalent metal cation site.

This sequence belongs to the HpcH/HpaI aldolase family. Requires a divalent metal cation as cofactor.

The enzyme catalyses D-glyceraldehyde + 3-hydroxypyruvate = 2-dehydro-D-gluconate. It carries out the reaction D-glyceraldehyde + pyruvate = 2-dehydro-3-deoxy-L-galactonate. It catalyses the reaction 2-dehydro-3-deoxy-D-gluconate = D-glyceraldehyde + pyruvate. In terms of biological role, aldolase which can catalyze in vitro the aldolisation reaction between hydroxypyruvate (HPA) or pyruvate (PA) and D-glyceraldehyde (D-GA). The condensation of hydroxypyruvate and D-glyceraldehyde produces 2-dehydro-D-gluconate as the major product. The condensation of pyruvate and D-glyceraldehyde produces 2-dehydro-3-deoxy-L-galactonate as the major product and 2-dehydro-3-deoxy-D-gluconate. This is Hydroxypyruvate/pyruvate aldolase from Roseovarius nubinhibens (strain ATCC BAA-591 / DSM 15170 / ISM).